Here is a 204-residue protein sequence, read N- to C-terminus: 8-oxoguanine DNA glycosylase/AP lyase (204 aa).

Catalysis depends on residues Lys129 and Asp147.

The protein belongs to the type-2 OGG1 family.

It carries out the reaction 2'-deoxyribonucleotide-(2'-deoxyribose 5'-phosphate)-2'-deoxyribonucleotide-DNA = a 3'-end 2'-deoxyribonucleotide-(2,3-dehydro-2,3-deoxyribose 5'-phosphate)-DNA + a 5'-end 5'-phospho-2'-deoxyribonucleoside-DNA + H(+). Functionally, catalyzes the excision of an oxidatively damaged form of guanine (7,8-dihydro-8-oxoguanine = 8-oxoG) from DNA. Also cleaves the DNA backbone at apurinic/apyrimidinic sites (AP sites). The polypeptide is 8-oxoguanine DNA glycosylase/AP lyase (Thermoplasma acidophilum (strain ATCC 25905 / DSM 1728 / JCM 9062 / NBRC 15155 / AMRC-C165)).